The chain runs to 324 residues: Thiamine thiazole synthase (324 aa).

Substrate contacts are provided by residues Cys-86, 107–108 (EA), Gly-115, and Val-180. At Cys-213 the chain carries 2,3-didehydroalanine (Cys). Substrate-binding positions include Asp-215, His-230, Met-282, and 292-294 (RMG).

Belongs to the THI4 family. As to quaternary structure, homooctamer. Fe cation serves as cofactor. In terms of processing, during the catalytic reaction, a sulfide is transferred from Cys-213 to a reaction intermediate, generating a dehydroalanine residue.

Its subcellular location is the cytoplasm. The protein localises to the nucleus. The catalysed reaction is [ADP-thiazole synthase]-L-cysteine + glycine + NAD(+) = [ADP-thiazole synthase]-dehydroalanine + ADP-5-ethyl-4-methylthiazole-2-carboxylate + nicotinamide + 3 H2O + 2 H(+). Involved in biosynthesis of the thiamine precursor thiazole. Catalyzes the conversion of NAD and glycine to adenosine diphosphate 5-(2-hydroxyethyl)-4-methylthiazole-2-carboxylic acid (ADT), an adenylated thiazole intermediate. The reaction includes an iron-dependent sulfide transfer from a conserved cysteine residue of the protein to a thiazole intermediate. The enzyme can only undergo a single turnover, which suggests it is a suicide enzyme. May have additional roles in adaptation to various stress conditions and in DNA damage tolerance. This is Thiamine thiazole synthase (sti35) from Fusarium solani subsp. phaseoli (Nectria haematococca).